The chain runs to 113 residues: Large ribosomal subunit protein bL19 (113 aa).

Belongs to the bacterial ribosomal protein bL19 family.

Its function is as follows. This protein is located at the 30S-50S ribosomal subunit interface and may play a role in the structure and function of the aminoacyl-tRNA binding site. The sequence is that of Large ribosomal subunit protein bL19 from Mycolicibacterium vanbaalenii (strain DSM 7251 / JCM 13017 / BCRC 16820 / KCTC 9966 / NRRL B-24157 / PYR-1) (Mycobacterium vanbaalenii).